Consider the following 278-residue polypeptide: Putative cysteine-rich repeat secretory protein 19 (278 aa).

Positions 1 to 32 (MYSSSSVSKRFVLVPIVVVVTTQLLLVRNVSS) are cleaved as a signal peptide. 2 consecutive Gnk2-homologous domains span residues 39–147 (YLHH…SLDT) and 160–267 (PSAK…LYPF).

It belongs to the cysteine-rich repeat secretory protein family.

The protein resides in the secreted. This chain is Putative cysteine-rich repeat secretory protein 19 (CRRSP19), found in Arabidopsis thaliana (Mouse-ear cress).